Here is a 151-residue protein sequence, read N- to C-terminus: Alpha-latroinsectotoxin-Lh1a (151 aa).

8 ANK repeats span residues 21 to 37 (TDVT…DLNA), 41 to 52 (ILIRNTNAVINI), 56 to 80 (VGLT…YLND), 84 to 104 (NGMT…VDFL), 105 to 116 (KWTPLHLAILFK), 117 to 125 (QLVIELLAK), 126 to 146 (TFFD…AVEK), and 147 to 151 (YIAAR).

The protein belongs to the cationic peptide 01 (latrotoxin) family. 02 (alpha-latroinsectotoxin) subfamily. In terms of assembly, homotetramer in membranes. Expressed by the venom gland.

It localises to the secreted. It is found in the target cell membrane. Its function is as follows. Insecticidal presynaptic neurotoxin that induces massive neurotransmitter release at insect (but not vertebrate) neuromuscular junctions. Native toxin forms cation-permeable pores (with high permeability to calcium) in lipid membranes locust muscle membrane and artificial lipid bilayers. May bind to insect neurexin-1 homolog, insect adhesion G protein-coupled receptor L1 homolog, and insect receptor-type tyrosine-protein phosphatase S homolog, and induces neurotransmitter exocytosis both by forming tetrameric pores in membranes and signaling via G protein-coupled receptor. Oligomerization is a process independent of divalent cations. The toxin forms channels with 0.55-0.58 nm entrance diameter and a relatively small conductance in planar phospholipid membranes. This Latrodectus hasselti (Redback spider) protein is Alpha-latroinsectotoxin-Lh1a.